The primary structure comprises 155 residues: 6,7-dimethyl-8-ribityllumazine synthase (155 aa).

5-amino-6-(D-ribitylamino)uracil contacts are provided by residues F26, 60–62 (ALE), and 84–86 (AVI). 89–90 (ET) contacts (2S)-2-hydroxy-3-oxobutyl phosphate. H92 serves as the catalytic Proton donor. Position 117 (N117) interacts with 5-amino-6-(D-ribitylamino)uracil. R131 contacts (2S)-2-hydroxy-3-oxobutyl phosphate.

It belongs to the DMRL synthase family.

The catalysed reaction is (2S)-2-hydroxy-3-oxobutyl phosphate + 5-amino-6-(D-ribitylamino)uracil = 6,7-dimethyl-8-(1-D-ribityl)lumazine + phosphate + 2 H2O + H(+). Its pathway is cofactor biosynthesis; riboflavin biosynthesis; riboflavin from 2-hydroxy-3-oxobutyl phosphate and 5-amino-6-(D-ribitylamino)uracil: step 1/2. Catalyzes the formation of 6,7-dimethyl-8-ribityllumazine by condensation of 5-amino-6-(D-ribitylamino)uracil with 3,4-dihydroxy-2-butanone 4-phosphate. This is the penultimate step in the biosynthesis of riboflavin. This is 6,7-dimethyl-8-ribityllumazine synthase from Chromobacterium violaceum (strain ATCC 12472 / DSM 30191 / JCM 1249 / CCUG 213 / NBRC 12614 / NCIMB 9131 / NCTC 9757 / MK).